Here is a 910-residue protein sequence, read N- to C-terminus: Schlafen family member 8 (910 aa).

The tract at residues 1-354 (METHPSLAVK…WVRMMVDFGP (354 aa)) is n'-domain region. Active-site residues include Glu205 and Glu210. 3 residues coordinate Zn(2+): His280, Cys282, and Cys319. 599-606 (GLPGSGKT) contributes to the ATP binding site.

The protein belongs to the Schlafen family. Subgroup III subfamily. Mg(2+) is required as a cofactor. In terms of tissue distribution, in T-cells, expressed at relatively constant levels during development: expressed in immature CD3(-)CD4(-)CD8(-) T-cells (DN stage), in CD4(+)CD8(+) double-positive stage (DP) and mature CD4(+) or CD8(+) thymocytes. Expression is slightly reduced at the DP stage.

It is found in the cytoplasm. Functionally, endoribonuclease that cleaves tRNAs and rRNAs. Cleaves tRNAs 11 nucleotides from the 3'-terminus at the acceptor stem. May be involved in immune system via regulation of inflammation. This Mus musculus (Mouse) protein is Schlafen family member 8.